Here is a 265-residue protein sequence, read N- to C-terminus: Mlc titration factor A (265 aa).

Positions 111, 148, 152, and 211 each coordinate Zn(2+).

Belongs to the MtfA family. As to quaternary structure, interacts with Mlc. It depends on Zn(2+) as a cofactor.

Its subcellular location is the cytoplasm. Involved in the modulation of the activity of the glucose-phosphotransferase system (glucose-PTS). Interacts with the transcriptional repressor Mlc, preventing its interaction with DNA and leading to the modulation of expression of genes regulated by Mlc, including ptsG, which encodes the PTS system glucose-specific EIICB component. In terms of biological role, shows zinc-dependent metallopeptidase activity. This Salmonella gallinarum (strain 287/91 / NCTC 13346) protein is Mlc titration factor A.